Reading from the N-terminus, the 611-residue chain is Ankyrin repeat protein SKIP35 (611 aa).

ANK repeat units follow at residues 292-322 (LFSN…EGGA), 323-353 (DNVN…RNSL), 356-384 (DVDL…NAIA), 385-414 (FLGP…DMEL), 416-442 (LALT…PPVL), and 445-478 (LSIE…DSTA).

Interacts with SKP1A/ASK1.

This chain is Ankyrin repeat protein SKIP35 (SKIP35), found in Arabidopsis thaliana (Mouse-ear cress).